Consider the following 331-residue polypeptide: Glycerophosphodiester phosphodiesterase 1 (331 aa).

Topologically, residues 1-3 (MWL) are cytoplasmic. Residues 4-24 (WEDQGGLLGPFSFVLVLLLVV) form a helical membrane-spanning segment. Residues 25-248 (TRSPFNACVL…PRYSVFWKQS (224 aa)) are Lumenal-facing. The region spanning 65–331 (VSAIAHRGGS…SMLEDCAPHF (267 aa)) is the GP-PDE domain. Positions 97 and 99 each coordinate Mg(2+). Asn168 carries N-linked (GlcNAc...) asparagine glycosylation. Asp174 lines the Mg(2+) pocket. The helical transmembrane segment at 249–269 (VFVVLDILLDWSMHNVLWYLC) threads the bilayer. Over 270–331 (GISAFLMQKD…SMLEDCAPHF (62 aa)) the chain is Cytoplasmic.

The protein belongs to the glycerophosphoryl diester phosphodiesterase family. As to quaternary structure, interacts with PRAF2. Interacts with RGS16. It depends on Mg(2+) as a cofactor. Post-translationally, N-glycosylated. As to expression, detected in heart, brain, lung, liver, skeletal muscle, kidney, pituitary and testis.

The protein localises to the cell membrane. Its subcellular location is the cytoplasmic vesicle membrane. It carries out the reaction sn-glycero-3-phospho-1D-myo-inositol + H2O = myo-inositol + sn-glycerol 3-phosphate + H(+). The catalysed reaction is 1-O-(1Z-octadecenyl)-sn-glycero-3-phospho-(N-5Z,8Z,11Z,14Z-eicosatetraenoyl)-ethanolamine + H2O = 1-O-(1Z-octadecenyl)-sn-glycero-3-phosphate + N-(5Z,8Z,11Z,14Z-eicosatetraenoyl)-ethanolamine + H(+). The enzyme catalyses 1-O-(1Z-octadecenyl)-sn-glycero-3-phospho-(N-9Z-octadecenoyl)-ethanolamine + H2O = 1-O-(1Z-octadecenyl)-sn-glycero-3-phosphate + N-(9Z-octadecenoyl) ethanolamine + H(+). It catalyses the reaction 1-O-(1Z-octadecenyl)-sn-glycero-3-phospho-N-hexadecanoyl-ethanolamine + H2O = 1-O-(1Z-octadecenyl)-sn-glycero-3-phosphate + N-hexadecanoylethanolamine + H(+). It carries out the reaction N-(4Z,7Z,10Z,13Z,16Z,19Z)-docosahexaenoyl-sn-glycero-3-phosphoethanolamine + H2O = N-(4Z,7Z,10Z,13Z,16Z,19Z)-docosahexaenoyl ethanolamine + sn-glycerol 3-phosphate + H(+). The catalysed reaction is N-eicosanoyl-sn-glycero-3-phosphoethanolamine + H2O = N-eicosanoyl ethanolamine + sn-glycerol 3-phosphate + H(+). The enzyme catalyses N-hexadecanoyl-sn-glycero-3-phosphoethanolamine + H2O = N-hexadecanoylethanolamine + sn-glycerol 3-phosphate + H(+). It catalyses the reaction N-(9Z-octadecenoyl)-sn-glycero-3-phosphoethanolamine + H2O = N-(9Z-octadecenoyl) ethanolamine + sn-glycerol 3-phosphate + H(+). It carries out the reaction N-(5Z,8Z,11Z,14Z-eicosatetraenoyl)-sn-glycero-3-phosphoethanolamine + H2O = N-(5Z,8Z,11Z,14Z-eicosatetraenoyl)-ethanolamine + sn-glycerol 3-phosphate + H(+). Its activity is regulated as follows. Inhibited by EDTA, calcium chloride, and zinc chloride. Enhanced by magnesium chloride. Glycerophosphodiester phosphodiesterase activity can be modulated by G-protein signaling pathways. Its function is as follows. Hydrolyzes the phosphodiester bond of glycerophosphodiesters such as glycerophosphoinositol (GroPIns) and glycerophosphoethanolamine (GroPEth), to yield a glycerol phosphate and an alcohol. Hydrolyzes glycerophospho-N-acylethanolamines to N-acylethanolamines in the brain and participates in bioactive N-acylethanolamine biosynthesis such as anandamide (an endocannabinoid), N-palmitoylethanolamine (an anti-inflammatory), and N-oleoylethanolamine (an anorexic). In addition, has a lysophospholipase D activity by hydrolyzing N-acyl-lysoplasmenylethanolamine (N-acyl-lysoPlsEt) to N-acylethanolamine. However lysophospholipase D activity is lower than glycerophosphodiester phosphodiesterase activity. Has little or no activity towards glycerophosphocholine. The protein is Glycerophosphodiester phosphodiesterase 1 of Rattus norvegicus (Rat).